The primary structure comprises 289 residues: Ribosomal protein L11 methyltransferase (289 aa).

Residues T142, G163, D185, and N226 each coordinate S-adenosyl-L-methionine.

It belongs to the methyltransferase superfamily. PrmA family.

It localises to the cytoplasm. It catalyses the reaction L-lysyl-[protein] + 3 S-adenosyl-L-methionine = N(6),N(6),N(6)-trimethyl-L-lysyl-[protein] + 3 S-adenosyl-L-homocysteine + 3 H(+). Its function is as follows. Methylates ribosomal protein L11. The chain is Ribosomal protein L11 methyltransferase from Legionella pneumophila (strain Paris).